A 150-amino-acid polypeptide reads, in one-letter code: Arginine repressor (150 aa).

It belongs to the ArgR family.

The protein resides in the cytoplasm. Its pathway is amino-acid biosynthesis; L-arginine biosynthesis [regulation]. In terms of biological role, regulates arginine biosynthesis genes. The polypeptide is Arginine repressor (Desulfitobacterium hafniense (strain DSM 10664 / DCB-2)).